An 84-amino-acid polypeptide reads, in one-letter code: Large ribosomal subunit protein bL31B (84 aa).

Belongs to the bacterial ribosomal protein bL31 family. Type B subfamily. Part of the 50S ribosomal subunit.

The chain is Large ribosomal subunit protein bL31B from Acinetobacter baumannii (strain AB307-0294).